The sequence spans 363 residues: Protein-arginine kinase (363 aa).

The region spanning 24–254 (IVLSSRIRLA…AQLIEQERSA (231 aa)) is the Phosphagen kinase C-terminal domain. ATP contacts are provided by residues 27-31 (SSRIR), His-92, Arg-125, 176-180 (RASVM), and 207-212 (RGIYGE). An RDXXRA motif of the pArg binding pocket involved in allosteric regulation motif is present at residues 337–342 (RDARRA).

This sequence belongs to the ATP:guanido phosphotransferase family.

It carries out the reaction L-arginyl-[protein] + ATP = N(omega)-phospho-L-arginyl-[protein] + ADP + H(+). With respect to regulation, appears to be allosterically activated by the binding of pArg-containing polypeptides to the pArg-binding pocket localized in the C-terminal domain of McsB. Functionally, catalyzes the specific phosphorylation of arginine residues in a large number of proteins. Is part of the bacterial stress response system. Protein arginine phosphorylation has a physiologically important role and is involved in the regulation of many critical cellular processes, such as protein homeostasis, motility, competence, and stringent and stress responses, by regulating gene expression and protein activity. This chain is Protein-arginine kinase, found in Bacillus velezensis (strain DSM 23117 / BGSC 10A6 / LMG 26770 / FZB42) (Bacillus amyloliquefaciens subsp. plantarum).